Consider the following 330-residue polypeptide: tRNA U34 carboxymethyltransferase (330 aa).

Carboxy-S-adenosyl-L-methionine-binding positions include Lys-91, Trp-105, Lys-110, Gly-130, 152-154 (DPS), 181-182 (IE), Met-196, Tyr-200, and Arg-315.

The protein belongs to the class I-like SAM-binding methyltransferase superfamily. CmoB family. Homotetramer.

The catalysed reaction is carboxy-S-adenosyl-L-methionine + 5-hydroxyuridine(34) in tRNA = 5-carboxymethoxyuridine(34) in tRNA + S-adenosyl-L-homocysteine + H(+). Catalyzes carboxymethyl transfer from carboxy-S-adenosyl-L-methionine (Cx-SAM) to 5-hydroxyuridine (ho5U) to form 5-carboxymethoxyuridine (cmo5U) at position 34 in tRNAs. The sequence is that of tRNA U34 carboxymethyltransferase from Shewanella woodyi (strain ATCC 51908 / MS32).